The chain runs to 1187 residues: DNA-directed RNA polymerase subunit beta (1187 aa).

The protein belongs to the RNA polymerase beta chain family. The RNAP catalytic core consists of 2 alpha, 1 beta, 1 beta' and 1 omega subunit. When a sigma factor is associated with the core the holoenzyme is formed, which can initiate transcription.

It carries out the reaction RNA(n) + a ribonucleoside 5'-triphosphate = RNA(n+1) + diphosphate. Functionally, DNA-dependent RNA polymerase catalyzes the transcription of DNA into RNA using the four ribonucleoside triphosphates as substrates. This is DNA-directed RNA polymerase subunit beta from Streptococcus mutans serotype c (strain ATCC 700610 / UA159).